Consider the following 320-residue polypeptide: N-acetylneuraminate lyase (320 aa).

Aceneuramate is bound by residues threonine 51 and threonine 52. The Proton donor role is filled by tyrosine 143. Lysine 173 acts as the Schiff-base intermediate with substrate in catalysis. 5 residues coordinate aceneuramate: serine 175, glycine 199, aspartate 201, glutamate 202, and serine 218.

The protein belongs to the DapA family. NanA subfamily. In terms of assembly, homotetramer.

It localises to the cytoplasm. It catalyses the reaction aceneuramate = aldehydo-N-acetyl-D-mannosamine + pyruvate. Its pathway is amino-sugar metabolism; N-acetylneuraminate degradation. Catalyzes the cleavage of N-acetylneuraminic acid (sialic acid) to form pyruvate and N-acetylmannosamine via a Schiff base intermediate. It prevents sialic acids from being recycled and returning to the cell surface. Involved in the N-glycolylneuraminic acid (Neu5Gc) degradation pathway. This is N-acetylneuraminate lyase from Pongo abelii (Sumatran orangutan).